The primary structure comprises 358 residues: Protein ocs (358 aa).

The protein belongs to the lysopine/nopaline/octopine/opine/vitopine dehydrogenases family.

The catalysed reaction is D-octopine + NAD(+) + H2O = L-arginine + pyruvate + NADH + H(+). The enzyme catalyses D-lysopine + NADP(+) + H2O = L-lysine + pyruvate + NADPH + H(+). In terms of biological role, reductive condensation of pyruvate and arginine, lysine, histidine, or octopine to form octopine, lysopine, histopine, or octopinic acid, respectively. NADPH is the preferred cofactor, but NADH can also be used. This chain is Protein ocs (ocs), found in Agrobacterium vitis (Rhizobium vitis).